A 335-amino-acid polypeptide reads, in one-letter code: SAM pointed domain-containing Ets transcription factor (335 aa).

Positions Met1 to Pro20 are enriched in low complexity. Disordered regions lie at residues Met1–Arg25 and Ala75–Ala100. Positions Glu129–Ala213 constitute a PNT domain. The segment at residues Ile249–Val332 is a DNA-binding region (ETS).

Belongs to the ETS family. Interacts with the DNA-binding domain of the androgen receptor. Interacts with NKX3-1. Expressed in a very restricted set of primarily hormone-regulated epithelial tissues with particularly high expression in the prostate gland. Significantly lower expression is seen in other hormone regulated tissues such as mammary gland, salivary gland, and ovary. Expressed in prostate carcinoma cells.

Its subcellular location is the nucleus. In terms of biological role, may function as an androgen-independent transactivator of the prostate-specific antigen (PSA) promoter. Binds to 5'-GGAT-3' DNA sequences. May play a role in the regulation of the prostate gland and/or prostate cancer development. Acts as a transcriptional activator for SERPINB5 promoter. The polypeptide is SAM pointed domain-containing Ets transcription factor (SPDEF) (Homo sapiens (Human)).